The chain runs to 607 residues: Protein PLASTID MOVEMENT IMPAIRED 2 (607 aa).

2 coiled-coil regions span residues 66–295 (KAKK…NAEL) and 329–445 (MLER…ESRR).

This sequence belongs to the WEB family. In terms of assembly, interacts with WEB1. As to expression, ubiquitous but preferentially in chloroplast-containing tissues.

Its subcellular location is the cytoplasm. Functionally, required for the chloroplast avoidance response under high intensity blue light. This avoidance response consists in the relocation of chloroplasts on the anticlinal side of exposed cells. Acts in association with WEB1 to maintain the velocity of chloroplast photorelocation movement via cp-actin filaments regulation. This chain is Protein PLASTID MOVEMENT IMPAIRED 2 (PMI2), found in Arabidopsis thaliana (Mouse-ear cress).